Consider the following 598-residue polypeptide: DNA primase (598 aa).

The CHC2-type zinc-finger motif lies at 38 to 62; that stretch reads CPFHDEKTPSFTVSEDKQICHCFGC. The region spanning 260–341 is the Toprim domain; that stretch reads DEIILLEGFM…NVYVVQLPSG (82 aa). Mg(2+) contacts are provided by glutamate 266, aspartate 310, and aspartate 312.

The protein belongs to the DnaG primase family. Monomer. Interacts with DnaB. It depends on Zn(2+) as a cofactor. Mg(2+) is required as a cofactor.

It catalyses the reaction ssDNA + n NTP = ssDNA/pppN(pN)n-1 hybrid + (n-1) diphosphate.. Its function is as follows. RNA polymerase that catalyzes the synthesis of short RNA molecules used as primers for DNA polymerase during DNA replication. This chain is DNA primase, found in Staphylococcus epidermidis (strain ATCC 12228 / FDA PCI 1200).